The primary structure comprises 82 residues: Small ribosomal subunit protein bS16 (82 aa).

The protein belongs to the bacterial ribosomal protein bS16 family.

The protein is Small ribosomal subunit protein bS16 of Alcanivorax borkumensis (strain ATCC 700651 / DSM 11573 / NCIMB 13689 / SK2).